Here is a 107-residue protein sequence, read N- to C-terminus: Small ribosomal subunit protein uS10 (107 aa).

Belongs to the universal ribosomal protein uS10 family. As to quaternary structure, part of the 30S ribosomal subunit.

Its function is as follows. Involved in the binding of tRNA to the ribosomes. In Deinococcus geothermalis (strain DSM 11300 / CIP 105573 / AG-3a), this protein is Small ribosomal subunit protein uS10.